We begin with the raw amino-acid sequence, 244 residues long: tRNA pseudouridine synthase B (244 aa).

The Nucleophile role is filled by Asp46.

Belongs to the pseudouridine synthase TruB family. Type 1 subfamily.

It catalyses the reaction uridine(55) in tRNA = pseudouridine(55) in tRNA. Functionally, responsible for synthesis of pseudouridine from uracil-55 in the psi GC loop of transfer RNAs. The protein is tRNA pseudouridine synthase B of Bordetella avium (strain 197N).